The sequence spans 862 residues: Eukaryotic translation initiation factor 3 subunit C (862 aa).

Residues methionine 1–lysine 81 are disordered. Acidic residues predominate over residues serine 17–glutamate 54. Basic and acidic residues predominate over residues threonine 55–alanine 65. The span at serine 66 to glutamate 75 shows a compositional bias: acidic residues. The 175-residue stretch at phenylalanine 600–glutamate 774 folds into the PCI domain. The interval arginine 813–alanine 862 is disordered. Positions glycine 818 to alanine 862 are enriched in gly residues.

It belongs to the eIF-3 subunit C family. Component of the eukaryotic translation initiation factor 3 (eIF-3) complex.

Its subcellular location is the cytoplasm. Functionally, component of the eukaryotic translation initiation factor 3 (eIF-3) complex, which is involved in protein synthesis of a specialized repertoire of mRNAs and, together with other initiation factors, stimulates binding of mRNA and methionyl-tRNAi to the 40S ribosome. The eIF-3 complex specifically targets and initiates translation of a subset of mRNAs involved in cell proliferation. This chain is Eukaryotic translation initiation factor 3 subunit C (nip1), found in Neosartorya fischeri (strain ATCC 1020 / DSM 3700 / CBS 544.65 / FGSC A1164 / JCM 1740 / NRRL 181 / WB 181) (Aspergillus fischerianus).